The primary structure comprises 491 residues: uncharacterized protein (491 aa).

Residue tryptophan 99 coordinates substrate. Asparagine 137 is a binding site for Ca(2+). Histidine 138 serves as a coordination point for substrate. Ca(2+)-binding residues include glutamate 177 and aspartate 190. Substrate is bound at residue arginine 219. Residues aspartate 221, histidine 225, and glutamate 245 each coordinate Ca(2+). The active-site Nucleophile is aspartate 221. Residue 224-225 participates in substrate binding; sequence KH. Catalysis depends on glutamate 245, which acts as the Proton donor. Substrate is bound by residues glycine 249, histidine 312, and arginine 360.

The protein belongs to the glycosyl hydrolase 13 family. The cofactor is Ca(2+).

It localises to the cytoplasm. The protein localises to the nucleus. This is an uncharacterized protein from Schizosaccharomyces pombe (strain 972 / ATCC 24843) (Fission yeast).